Consider the following 426-residue polypeptide: Lipoyl synthase, mitochondrial (426 aa).

Residues 1 to 29 constitute a mitochondrion transit peptide; that stretch reads MASPAPLQRLQAPLRRSLARAAVLSSRTY. Over residues 27–42 the composition is skewed to polar residues; the sequence is RTYATIPSPSDPGLTQ. The tract at residues 27–61 is disordered; sequence RTYATIPSPSDPGLTQSSPSPAASTTPAKKAPRPS. Residues 43-55 are compositionally biased toward low complexity; the sequence is SSPSPAASTTPAK. The [4Fe-4S] cluster site is built by Cys-140, Cys-145, Cys-151, Cys-171, Cys-175, Cys-178, and Ser-388. Residues 154–377 form the Radical SAM core domain; it reads GNDKSAATAT…KQRALDMGFL (224 aa).

It belongs to the radical SAM superfamily. Lipoyl synthase family. It depends on [4Fe-4S] cluster as a cofactor.

The protein localises to the mitochondrion. It carries out the reaction [[Fe-S] cluster scaffold protein carrying a second [4Fe-4S](2+) cluster] + N(6)-octanoyl-L-lysyl-[protein] + 2 oxidized [2Fe-2S]-[ferredoxin] + 2 S-adenosyl-L-methionine + 4 H(+) = [[Fe-S] cluster scaffold protein] + N(6)-[(R)-dihydrolipoyl]-L-lysyl-[protein] + 4 Fe(3+) + 2 hydrogen sulfide + 2 5'-deoxyadenosine + 2 L-methionine + 2 reduced [2Fe-2S]-[ferredoxin]. It functions in the pathway protein modification; protein lipoylation via endogenous pathway; protein N(6)-(lipoyl)lysine from octanoyl-[acyl-carrier-protein]: step 2/2. In terms of biological role, catalyzes the radical-mediated insertion of two sulfur atoms into the C-6 and C-8 positions of the octanoyl moiety bound to the lipoyl domains of lipoate-dependent enzymes, thereby converting the octanoylated domains into lipoylated derivatives. This chain is Lipoyl synthase, mitochondrial, found in Podospora anserina (strain S / ATCC MYA-4624 / DSM 980 / FGSC 10383) (Pleurage anserina).